Consider the following 140-residue polypeptide: Small ribosomal subunit protein uS12 (140 aa).

Positions 33–55 are disordered; that stretch reads KEQTNVSSPQKRGVCTRVGTMTP. D102 is subject to 3-methylthioaspartic acid.

It belongs to the universal ribosomal protein uS12 family. Part of the 30S ribosomal subunit. Contacts proteins S8 and S17. May interact with IF1 in the 30S initiation complex.

Its function is as follows. With S4 and S5 plays an important role in translational accuracy. Functionally, interacts with and stabilizes bases of the 16S rRNA that are involved in tRNA selection in the A site and with the mRNA backbone. Located at the interface of the 30S and 50S subunits, it traverses the body of the 30S subunit contacting proteins on the other side and probably holding the rRNA structure together. The combined cluster of proteins S8, S12 and S17 appears to hold together the shoulder and platform of the 30S subunit. The sequence is that of Small ribosomal subunit protein uS12 from Geobacillus thermodenitrificans (strain NG80-2).